Here is an 82-residue protein sequence, read N- to C-terminus: RNA-binding protein Hfq (82 aa).

The Sm domain occupies 9–69 (DQLLNTARKD…ISTIIPAKII (61 aa)).

This sequence belongs to the Hfq family. Homohexamer.

Its function is as follows. RNA chaperone that binds small regulatory RNA (sRNAs) and mRNAs to facilitate mRNA translational regulation in response to envelope stress, environmental stress and changes in metabolite concentrations. Also binds with high specificity to tRNAs. The chain is RNA-binding protein Hfq from Leptospira borgpetersenii serovar Hardjo-bovis (strain L550).